Reading from the N-terminus, the 233-residue chain is DNA-directed RNA polymerase V subunit 5C (233 aa).

The protein belongs to the archaeal Rpo5/eukaryotic RPB5 RNA polymerase subunit family. In terms of assembly, component of the RNA polymerase V complex. Expressed in flower buds and siliques.

The protein localises to the nucleus. Its function is as follows. DNA-dependent RNA polymerase catalyzes the transcription of DNA into RNA using the four ribonucleoside triphosphates as substrates. Component of RNA polymerase V involved in RNA-directed DNA methylation-dependent (RdDM) silencing of endogenous repeated sequences, including transposable elements. The chain is DNA-directed RNA polymerase V subunit 5C (NRPE5C) from Arabidopsis thaliana (Mouse-ear cress).